Reading from the N-terminus, the 264-residue chain is Thiazole synthase (264 aa).

Catalysis depends on K98, which acts as the Schiff-base intermediate with DXP. Residues G159, 185–186 (AG), and 207–208 (AS) each bind 1-deoxy-D-xylulose 5-phosphate. Positions 243 to 264 (HFAEASSPPEGRAHLDPERPAF) are disordered. The segment covering 253-264 (GRAHLDPERPAF) has biased composition (basic and acidic residues).

This sequence belongs to the ThiG family. In terms of assembly, homotetramer. Forms heterodimers with either ThiH or ThiS.

Its subcellular location is the cytoplasm. The catalysed reaction is [ThiS sulfur-carrier protein]-C-terminal-Gly-aminoethanethioate + 2-iminoacetate + 1-deoxy-D-xylulose 5-phosphate = [ThiS sulfur-carrier protein]-C-terminal Gly-Gly + 2-[(2R,5Z)-2-carboxy-4-methylthiazol-5(2H)-ylidene]ethyl phosphate + 2 H2O + H(+). Its pathway is cofactor biosynthesis; thiamine diphosphate biosynthesis. Functionally, catalyzes the rearrangement of 1-deoxy-D-xylulose 5-phosphate (DXP) to produce the thiazole phosphate moiety of thiamine. Sulfur is provided by the thiocarboxylate moiety of the carrier protein ThiS. In vitro, sulfur can be provided by H(2)S. This is Thiazole synthase from Streptomyces avermitilis (strain ATCC 31267 / DSM 46492 / JCM 5070 / NBRC 14893 / NCIMB 12804 / NRRL 8165 / MA-4680).